A 934-amino-acid chain; its full sequence is ATP-dependent RNA helicase dbp-10 (934 aa).

A disordered region spans residues 21–43 (LFNNDSDFEDNSSKHHTKKGAVT). Positions 99–127 (GGFQAMGLNAHLLRAITRKGFSVPTPIQR) match the Q motif motif. The Helicase ATP-binding domain maps to 130-302 (IPLILERKDV…RAGLQEPSLV (173 aa)). 143-150 (ARTGSGKT) provides a ligand contact to ATP. The DEAD box signature appears at 250-253 (DEAD). Disordered stretches follow at residues 343–370 (GPPE…NPKE), 613–722 (ELGP…FQDP), and 851–934 (GAQP…RQKR). Residues 359 to 513 (KRKREYRPNP…KNPSFAADVV (155 aa)) enclose the Helicase C-terminal domain. Composition is skewed to acidic residues over residues 644–654 (DEDDEDVDMED) and 662–700 (EETN…DSEM). The segment covering 864-926 (EKAPKDADKF…VAEKKREKNA (63 aa)) has biased composition (basic and acidic residues).

The protein belongs to the DEAD box helicase family. DDX54/DBP10 subfamily.

The protein resides in the nucleus. It localises to the nucleolus. The catalysed reaction is ATP + H2O = ADP + phosphate + H(+). ATP-binding RNA helicase involved in the biogenesis of 60S ribosomal subunits and is required for the normal formation of 25S and 5.8S rRNAs. The chain is ATP-dependent RNA helicase dbp-10 (dbp-10) from Neurospora crassa (strain ATCC 24698 / 74-OR23-1A / CBS 708.71 / DSM 1257 / FGSC 987).